Consider the following 336-residue polypeptide: Ketol-acid reductoisomerase (NADP(+)) (336 aa).

One can recognise a KARI N-terminal Rossmann domain in the interval 2 to 182 (AKIYYQQDCN…GGARAGVLET (181 aa)). NADP(+)-binding positions include 25–28 (YGSQ), Ser51, Ser53, and 83–86 (DEKQ). The active site involves His108. Gly134 contributes to the NADP(+) binding site. Positions 183–328 (TFREETETDL…AELRGLMSWT (146 aa)) constitute a KARI C-terminal knotted domain. 4 residues coordinate Mg(2+): Asp191, Glu195, Glu227, and Glu231. Ser252 is a substrate binding site.

Belongs to the ketol-acid reductoisomerase family. Mg(2+) serves as cofactor.

It carries out the reaction (2R)-2,3-dihydroxy-3-methylbutanoate + NADP(+) = (2S)-2-acetolactate + NADPH + H(+). The enzyme catalyses (2R,3R)-2,3-dihydroxy-3-methylpentanoate + NADP(+) = (S)-2-ethyl-2-hydroxy-3-oxobutanoate + NADPH + H(+). It participates in amino-acid biosynthesis; L-isoleucine biosynthesis; L-isoleucine from 2-oxobutanoate: step 2/4. Its pathway is amino-acid biosynthesis; L-valine biosynthesis; L-valine from pyruvate: step 2/4. Involved in the biosynthesis of branched-chain amino acids (BCAA). Catalyzes an alkyl-migration followed by a ketol-acid reduction of (S)-2-acetolactate (S2AL) to yield (R)-2,3-dihydroxy-isovalerate. In the isomerase reaction, S2AL is rearranged via a Mg-dependent methyl migration to produce 3-hydroxy-3-methyl-2-ketobutyrate (HMKB). In the reductase reaction, this 2-ketoacid undergoes a metal-dependent reduction by NADPH to yield (R)-2,3-dihydroxy-isovalerate. In Lachnoclostridium phytofermentans (strain ATCC 700394 / DSM 18823 / ISDg) (Clostridium phytofermentans), this protein is Ketol-acid reductoisomerase (NADP(+)).